The primary structure comprises 446 residues: Maltoporin (446 aa).

An N-terminal signal peptide occupies residues 1 to 25 (MMITLRKLPLAVAVAAGVMSAQAMA).

The protein belongs to the porin LamB (TC 1.B.3) family. Homotrimer formed of three 18-stranded antiparallel beta-barrels, containing three independent channels.

The protein resides in the cell outer membrane. The enzyme catalyses beta-maltose(in) = beta-maltose(out). In terms of biological role, involved in the transport of maltose and maltodextrins. The polypeptide is Maltoporin (Escherichia coli (strain SE11)).